Reading from the N-terminus, the 621-residue chain is Cystathionine gamma-synthase (621 aa).

At K429 the chain carries N6-(pyridoxal phosphate)lysine.

This sequence belongs to the trans-sulfuration enzymes family. MET7 subfamily. As to quaternary structure, both met-3 and met-7 are required to form a functional cystathionine gamma-synthase. The cofactor is pyridoxal 5'-phosphate.

The catalysed reaction is O-succinyl-L-homoserine + L-cysteine = L,L-cystathionine + succinate + H(+). It participates in amino-acid biosynthesis; L-methionine biosynthesis via de novo pathway; L-cystathionine from O-succinyl-L-homoserine: step 1/1. In terms of biological role, catalyzes the formation of L-cystathionine from O-succinyl-L-homoserine (OSHS) and L-cysteine, via a gamma-replacement reaction. In the absence of thiol, catalyzes gamma-elimination to form 2-oxobutanoate, succinate and ammonia. The chain is Cystathionine gamma-synthase (met-7) from Neurospora crassa (strain ATCC 24698 / 74-OR23-1A / CBS 708.71 / DSM 1257 / FGSC 987).